The following is a 201-amino-acid chain: Small ribosomal subunit protein uS4 (201 aa).

In terms of domain architecture, S4 RNA-binding spans 93-153 (QRLDNIVYRL…EKSKNLVIIK (61 aa)).

Belongs to the universal ribosomal protein uS4 family. In terms of assembly, part of the 30S ribosomal subunit. Contacts protein S5. The interaction surface between S4 and S5 is involved in control of translational fidelity.

One of the primary rRNA binding proteins, it binds directly to 16S rRNA where it nucleates assembly of the body of the 30S subunit. Functionally, with S5 and S12 plays an important role in translational accuracy. The sequence is that of Small ribosomal subunit protein uS4 from Latilactobacillus sakei subsp. sakei (strain 23K) (Lactobacillus sakei subsp. sakei).